Reading from the N-terminus, the 454-residue chain is tRNA modification GTPase MnmE (454 aa).

Residues R23, E80, and K120 each contribute to the (6S)-5-formyl-5,6,7,8-tetrahydrofolate site. The TrmE-type G domain maps to 216 to 377 (GMKVVIAGRP…LRNHLKQSMG (162 aa)). N226 contributes to the K(+) binding site. Residues 226–231 (NAGKSS), 245–251 (TDIAGTT), 270–273 (DTAG), 335–338 (NKAD), and 358–360 (SAR) contribute to the GTP site. S230 is a binding site for Mg(2+). Residues T245, I247, and T250 each coordinate K(+). T251 lines the Mg(2+) pocket. A (6S)-5-formyl-5,6,7,8-tetrahydrofolate-binding site is contributed by K454.

The protein belongs to the TRAFAC class TrmE-Era-EngA-EngB-Septin-like GTPase superfamily. TrmE GTPase family. As to quaternary structure, homodimer. Heterotetramer of two MnmE and two MnmG subunits. K(+) serves as cofactor.

The protein resides in the cytoplasm. Exhibits a very high intrinsic GTPase hydrolysis rate. Involved in the addition of a carboxymethylaminomethyl (cmnm) group at the wobble position (U34) of certain tRNAs, forming tRNA-cmnm(5)s(2)U34. This is tRNA modification GTPase MnmE from Shigella sonnei (strain Ss046).